We begin with the raw amino-acid sequence, 188 residues long: Type II secretion system protein H (188 aa).

Residues 1–10 (MKRSTRKQQG) constitute a propeptide, leader sequence. Phenylalanine 11 is subject to N-methylphenylalanine. Residues 13–35 (LLEMMLVVLLAGIAAGMVVMAFP) form a helical membrane-spanning segment.

The protein belongs to the GSP H family. In terms of assembly, type II secretion is composed of four main components: the outer membrane complex, the inner membrane complex, the cytoplasmic secretion ATPase and the periplasm-spanning pseudopilus. Interacts with core component OutG. Post-translationally, cleaved by prepilin peptidase. Methylated by prepilin peptidase at the amino group of the N-terminal phenylalanine once the leader sequence is cleaved by prepilin peptidase.

The protein resides in the cell inner membrane. Functionally, component of the type II secretion system required for the energy-dependent secretion of extracellular factors such as proteases and toxins from the periplasm. Part of the pseudopilus tip complex that is critical for the recognition and binding of secretion substrates. This is Type II secretion system protein H (outH) from Pectobacterium carotovorum subsp. carotovorum (Erwinia carotovora subsp. carotovora).